A 306-amino-acid chain; its full sequence is Putative secretory carrier-associated membrane protein 1 (306 aa).

Positions 1 to 60 are disordered; that stretch reads MAGRYDSNPFEEDDVNPFSEQARGKAGGQPSYGGGAFYMPNPRNVPSMSSNSRLSPLPPE. At 1 to 141 the chain is on the cytoplasmic side; that stretch reads MAGRYDSNPF…EIPSHLQRMQ (141 aa). Positions 25 to 36 are enriched in gly residues; sequence KAGGQPSYGGGA. Over residues 44-54 the composition is skewed to polar residues; that stretch reads NVPSMSSNSRL. Residues 72-109 are a coiled coil; sequence LDSSKDLKNREKELQAREAELNKREKELKRREEAAARA. 4 helical membrane passes run 142–162, 174–194, 209–229, and 257–277; these read YVAF…VIAV, IWLL…VLWY, FGLF…SAVA, and IFYF…IWVI. At 278–306 the chain is on the cytoplasmic side; the sequence is QQVYMYFRGSGKAAEMKRDATRGAMRAAF.

This sequence belongs to the SCAMP family.

It localises to the cell membrane. The protein resides in the cytoplasmic vesicle. Its subcellular location is the secretory vesicle membrane. Functionally, probably involved in membrane trafficking. The protein is Putative secretory carrier-associated membrane protein 1 (SCAMP1) of Oryza sativa subsp. indica (Rice).